The following is a 133-amino-acid chain: MARKKEFRYRGYTLDELLNMSLEEFAKLLPARQRRSLKRGLSPEQKKLLRKIRLAKKGKYNKPIRTHSRDMIVLPEMVGITIHVHNGKEFVPIEIKPEMIGHYLGEFALTRKIVQHGSPGVGATRSSMFVAVK.

It belongs to the universal ribosomal protein uS19 family.

Protein S19 forms a complex with S13 that binds strongly to the 16S ribosomal RNA. This Thermococcus gammatolerans (strain DSM 15229 / JCM 11827 / EJ3) protein is Small ribosomal subunit protein uS19.